We begin with the raw amino-acid sequence, 424 residues long: MTQMEMARKGVVSDEMKKVAEYEGVDVEIVRQKLAEGRAVLPKNKLHRIERPMIVGEGFSVKVNANIGTSQGFSSLEEEKEKARVAIEYGADSLMVLSTWGDLREIRRAIVEMSPVPVGSVPIYDSAVRSYQMKKNVVDFSEKDFFDMVIAHAEDGIDFMTIHVGVTRRVLDRIKSSRRVLKIVSRGGAIIAGWMIKNNKENPFYEHFDELLDIAKDYDITLSLGDGMRPGAVVDASDAQQFEELFVMGELVERAREKGVQVMLEGPGHVPLNEVEMNVRLMKKIGKGAPIFLLGPLPTDRAMGYDHIACAIGGALAGYYGADFLCYVTPSEHISLPDVEDVREGVIASKIAAIVADVARGNKKAWELEKKMALARKNFDWETMFSLSLGKDVAKKKYEERPYPDKGCSMCGPFCAIKIAEEFS.

Residues N66, M95, Y124, H163, 185 to 187, 226 to 229, and E265 contribute to the substrate site; these read SRG and DGMR. A Zn(2+)-binding site is contributed by H269. Residue F292 coordinates substrate. H333 provides a ligand contact to Zn(2+). Residues C408, C411, and C415 each coordinate [4Fe-4S] cluster.

It belongs to the ThiC family. Requires [4Fe-4S] cluster as cofactor.

The catalysed reaction is 5-amino-1-(5-phospho-beta-D-ribosyl)imidazole + S-adenosyl-L-methionine = 4-amino-2-methyl-5-(phosphooxymethyl)pyrimidine + CO + 5'-deoxyadenosine + formate + L-methionine + 3 H(+). It participates in cofactor biosynthesis; thiamine diphosphate biosynthesis. Catalyzes the synthesis of the hydroxymethylpyrimidine phosphate (HMP-P) moiety of thiamine from aminoimidazole ribotide (AIR) in a radical S-adenosyl-L-methionine (SAM)-dependent reaction. In Thermotoga petrophila (strain ATCC BAA-488 / DSM 13995 / JCM 10881 / RKU-1), this protein is Phosphomethylpyrimidine synthase.